The following is a 744-amino-acid chain: NAD(P)H-quinone oxidoreductase subunit 5, chloroplastic (744 aa).

A run of 16 helical transmembrane segments spans residues 9–29 (WIIPFIPLPVPILIGVGLLFF), 40–60 (WVFPSIFLLTIVMIFSIDLSI), 89–109 (IDSLTSIMSILITTVGILVLI), 125–145 (FTYLSFFNTSMLGLVTSSNLI), 147–167 (VYIFWELVGMCSYLLIGFWFT), 185–205 (GDFGLLLGILGFYWITGSLEF), 219–239 (NEVNIFFVTLCALLLFCGSVA), 258–278 (TPISALIHAATMVAAGIFLVA), 280–300 (LLPLFIVIPSIMSGIALIGII), 327–347 (LGYMILALGMGSYRAALFHLI), 354–374 (ALLFLGSGSIIHSMEAIVGYS), 396–416 (NAFLIGTLSLCGIPPFACFWS), 425–445 (WLYSPIFAIIACSTAGLTAFY), 552–572 (LFSMLVLVLFTFFVGSVGISF), 612–632 (FSVSIAFFGILIASFFYKPVF), and 724–744 (ISSYIFFFLLIFLVICYSIFI).

This sequence belongs to the complex I subunit 5 family. NDH is composed of at least 16 different subunits, 5 of which are encoded in the nucleus.

It localises to the plastid. It is found in the chloroplast thylakoid membrane. It carries out the reaction a plastoquinone + NADH + (n+1) H(+)(in) = a plastoquinol + NAD(+) + n H(+)(out). It catalyses the reaction a plastoquinone + NADPH + (n+1) H(+)(in) = a plastoquinol + NADP(+) + n H(+)(out). NDH shuttles electrons from NAD(P)H:plastoquinone, via FMN and iron-sulfur (Fe-S) centers, to quinones in the photosynthetic chain and possibly in a chloroplast respiratory chain. The immediate electron acceptor for the enzyme in this species is believed to be plastoquinone. Couples the redox reaction to proton translocation, and thus conserves the redox energy in a proton gradient. The chain is NAD(P)H-quinone oxidoreductase subunit 5, chloroplastic (ndhF) from Cicer arietinum (Chickpea).